Reading from the N-terminus, the 247-residue chain is uncharacterized protein (247 aa).

An N-terminal signal peptide occupies residues 1–35; sequence MWGPGVTAEGLSVAPAPPPLLPLLLLLALALVAPS. The chain crosses the membrane as a helical span at residues 82–102; it reads LSGLLILLVLFAIGYFLQRII. The disordered stretch occupies residues 109-176; the sequence is YPRGQARPGQ…RGSGGRLPPS (68 aa). Over residues 111–120 the composition is skewed to low complexity; sequence RGQARPGQAR. The segment covering 161–171 has biased composition (gly residues); it reads SGGGRGRGSGG.

Its subcellular location is the membrane. This is an uncharacterized protein from Mus musculus (Mouse).